The chain runs to 104 residues: ATP-dependent Clp protease adapter protein ClpS (104 aa).

It belongs to the ClpS family. Binds to the N-terminal domain of the chaperone ClpA.

Functionally, involved in the modulation of the specificity of the ClpAP-mediated ATP-dependent protein degradation. The sequence is that of ATP-dependent Clp protease adapter protein ClpS from Desulforapulum autotrophicum (strain ATCC 43914 / DSM 3382 / VKM B-1955 / HRM2) (Desulfobacterium autotrophicum).